The primary structure comprises 503 residues: ATP synthase subunit alpha (503 aa).

An ATP-binding site is contributed by 171 to 178 (DRQTGKTA).

It belongs to the ATPase alpha/beta chains family. As to quaternary structure, F-type ATPases have 2 components, CF(1) - the catalytic core - and CF(0) - the membrane proton channel. CF(1) has five subunits: alpha(3), beta(3), gamma(1), delta(1), epsilon(1). CF(0) has four main subunits: a(1), b(1), b'(1) and c(9-12).

The protein resides in the cellular thylakoid membrane. It catalyses the reaction ATP + H2O + 4 H(+)(in) = ADP + phosphate + 5 H(+)(out). Its function is as follows. Produces ATP from ADP in the presence of a proton gradient across the membrane. The alpha chain is a regulatory subunit. The chain is ATP synthase subunit alpha from Synechococcus sp. (strain PCC 6716).